The following is a 306-amino-acid chain: Mitochondrial brown fat uncoupling protein 1 (306 aa).

The Mitochondrial intermembrane segment spans residues 1–10; the sequence is MVGTTATDVA. The chain crosses the membrane as a helical span at residues 11 to 32; sequence PTMGVKIFSAGVAACLADVITF. 3 Solcar repeats span residues 11 to 102, 110 to 200, and 209 to 294; these read PTMG…VQEF, PSLR…MKGA, and DDVP…LKRE. The Mitochondrial matrix segment spans residues 33-73; it reads PLDTAKVRLQIQGECQTTSGIRYKGVLGTITTLAKTEGPLK. Lysine 56 provides a ligand contact to fatty acid 16:0. Residues 74–96 form a helical membrane-spanning segment; the sequence is LYSGLPAGLQRQISFASLRIGLY. Over 97–115 the chain is Mitochondrial intermembrane; that stretch reads DTVQEFWGGEEATPSLRSK. A helical transmembrane segment spans residues 116-132; that stretch reads ICAGLTTGGVAVFIGQP. Residues 133-177 are Mitochondrial matrix-facing; the sequence is TEVVKVRLQAQSHLHGLKPRYTGTYNAYRIIATTESLSTLWKGTT. A helical membrane pass occupies residues 178-194; sequence PNLLRNIIINCTELVTY. Residues 195 to 211 lie on the Mitochondrial intermembrane side of the membrane; the sequence is DLMKGALVRNDILADDV. Residues 212-231 form a helical membrane-spanning segment; sequence PCHLLSALIAGFCTTLLSSP. At 232–265 the chain is on the mitochondrial matrix side; sequence VDVVKTRFINSPQGQYTSVPSCAMSMLTKEGPTA. The residue at position 253 (cysteine 253) is a Cysteine sulfenic acid (-SOH). The chain crosses the membrane as a helical span at residues 266–288; that stretch reads FFKGFAPSFLRLASWNVIMFVCF. Lysine 268 contributes to the fatty acid 16:0 binding site. Over 289–306 the chain is Mitochondrial intermembrane; that stretch reads EKLKRELMKSRQTVDCAT.

Belongs to the mitochondrial carrier (TC 2.A.29) family. In terms of assembly, most probably functions as a monomer. Binds one purine nucleotide per monomer. However, has also been suggested to function as a homodimer or a homotetramer. Tightly associates with cardiolipin in the mitochondrion inner membrane; may stabilize and regulate its activity. Post-translationally, may undergo sulfenylation upon cold exposure. May increase the sensitivity of UCP1 thermogenic function to the activation by noradrenaline probably through structural effects. May undergo ubiquitin-mediated proteasomal degradation.

It localises to the mitochondrion inner membrane. The catalysed reaction is H(+)(in) = H(+)(out). With respect to regulation, has no constitutive proton transporter activity and has to be activated by long-chain fatty acids/LCFAs. Inhibited by purine nucleotides. Both purine nucleotides and LCFAs bind the cytosolic side of the transporter and directly compete to activate or inhibit it. Activated by noradrenaline and reactive oxygen species. Despite lacking canonical translational encoding for selenocysteine, a small pool of the protein has been observed to selectively incorporate selenocysteine at 'Cys-253'. Selenocysteine-modified protein is highly sensitive to redox modification and may constitute a pool of protein highly sensitive to activation by elevated levels of reactive oxygen species (ROS). Its function is as follows. Mitochondrial protein responsible for thermogenic respiration, a specialized capacity of brown adipose tissue and beige fat that participates in non-shivering adaptive thermogenesis to temperature and diet variations and more generally to the regulation of energy balance. Functions as a long-chain fatty acid/LCFA and proton symporter, simultaneously transporting one LCFA and one proton through the inner mitochondrial membrane. However, LCFAs remaining associated with the transporter via their hydrophobic tails, it results in an apparent transport of protons activated by LCFAs. Thereby, dissipates the mitochondrial proton gradient and converts the energy of substrate oxydation into heat instead of ATP. Regulates the production of reactive oxygen species/ROS by mitochondria. This is Mitochondrial brown fat uncoupling protein 1 from Ochotona dauurica (Daurian pika).